Reading from the N-terminus, the 165-residue chain is UPF0178 protein Bphyt_5655 (165 aa).

Disordered regions lie at residues 115–134 and 139–165; these read LRGS…RDSK and ELDR…PPTE.

This sequence belongs to the UPF0178 family.

The chain is UPF0178 protein Bphyt_5655 from Paraburkholderia phytofirmans (strain DSM 17436 / LMG 22146 / PsJN) (Burkholderia phytofirmans).